We begin with the raw amino-acid sequence, 343 residues long: Anthranilate 1,2-dioxygenase electron transfer component (343 aa).

A 2Fe-2S ferredoxin-type domain is found at 3-96 (HSVALNFADG…NAAFYFDHHS (94 aa)). 4 residues coordinate [2Fe-2S] cluster: Cys40, Cys45, Cys48, and Cys80. A ferredoxin-reductase region spans residues 98 to 338 (ICNAGETLKI…HIYSEKFLQS (241 aa)). One can recognise an FAD-binding FR-type domain in the interval 103–206 (ETLKIATVVT…EAPLGSFYLR (104 aa)).

The protein belongs to the bacterial ring-hydroxylating dioxygenase ferredoxin reductase family. As to quaternary structure, monomer. It is part of the anthranilate dioxygenase two component enzyme system. The other component is an oxygenase component consisting of 3 large (AntA) and 3 small (AntB) subunits. The cofactor is FAD. [2Fe-2S] cluster serves as cofactor.

The catalysed reaction is 2 reduced [2Fe-2S]-[ferredoxin] + NAD(+) + H(+) = 2 oxidized [2Fe-2S]-[ferredoxin] + NADH. Its pathway is aromatic compound metabolism; anthranilate degradation via hydroxylation; catechol from anthranilate: step 1/1. In terms of biological role, electron transfer component of anthranilate 1,2-dioxygenase system. The chain is Anthranilate 1,2-dioxygenase electron transfer component from Acinetobacter baylyi (strain ATCC 33305 / BD413 / ADP1).